Consider the following 188-residue polypeptide: UPF0398 protein ABC2016 (188 aa).

This sequence belongs to the UPF0398 family.

The sequence is that of UPF0398 protein ABC2016 from Shouchella clausii (strain KSM-K16) (Alkalihalobacillus clausii).